A 378-amino-acid polypeptide reads, in one-letter code: Glutamate 5-kinase (378 aa).

Lysine 19 is an ATP binding site. Substrate contacts are provided by serine 59, aspartate 146, and asparagine 158. Residues 178-179 (TD) and 220-226 (TGGMATK) contribute to the ATP site. In terms of domain architecture, PUA spans 285-363 (QGQIQVDAGA…GEIGEILGYK (79 aa)).

It belongs to the glutamate 5-kinase family.

The protein localises to the cytoplasm. It catalyses the reaction L-glutamate + ATP = L-glutamyl 5-phosphate + ADP. It participates in amino-acid biosynthesis; L-proline biosynthesis; L-glutamate 5-semialdehyde from L-glutamate: step 1/2. Catalyzes the transfer of a phosphate group to glutamate to form L-glutamate 5-phosphate. The chain is Glutamate 5-kinase from Moorella thermoacetica (strain ATCC 39073 / JCM 9320).